Here is a 195-residue protein sequence, read N- to C-terminus: Imidazoleglycerol-phosphate dehydratase (195 aa).

This sequence belongs to the imidazoleglycerol-phosphate dehydratase family.

It is found in the cytoplasm. The catalysed reaction is D-erythro-1-(imidazol-4-yl)glycerol 3-phosphate = 3-(imidazol-4-yl)-2-oxopropyl phosphate + H2O. It functions in the pathway amino-acid biosynthesis; L-histidine biosynthesis; L-histidine from 5-phospho-alpha-D-ribose 1-diphosphate: step 6/9. This chain is Imidazoleglycerol-phosphate dehydratase, found in Burkholderia cenocepacia (strain HI2424).